Reading from the N-terminus, the 1401-residue chain is DNA polymerase III PolC-type (1401 aa).

An Exonuclease domain is found at 388-543 (FVVFDIETTG…EDAKATAEIF (156 aa)).

The protein belongs to the DNA polymerase type-C family. PolC subfamily.

The protein resides in the cytoplasm. It catalyses the reaction DNA(n) + a 2'-deoxyribonucleoside 5'-triphosphate = DNA(n+1) + diphosphate. Functionally, required for replicative DNA synthesis. This DNA polymerase also exhibits 3' to 5' exonuclease activity. This Caldanaerobacter subterraneus subsp. tengcongensis (strain DSM 15242 / JCM 11007 / NBRC 100824 / MB4) (Thermoanaerobacter tengcongensis) protein is DNA polymerase III PolC-type.